Consider the following 229-residue polypeptide: Urease accessory protein UreF (229 aa).

This sequence belongs to the UreF family. In terms of assembly, ureD, UreF and UreG form a complex that acts as a GTP-hydrolysis-dependent molecular chaperone, activating the urease apoprotein by helping to assemble the nickel containing metallocenter of UreC. The UreE protein probably delivers the nickel.

Its subcellular location is the cytoplasm. Functionally, required for maturation of urease via the functional incorporation of the urease nickel metallocenter. In Staphylococcus aureus (strain JH1), this protein is Urease accessory protein UreF.